Reading from the N-terminus, the 312-residue chain is Pectin lyase (312 aa).

Residue Arg201 is part of the active site. The segment at 254-274 (GSGTFTDTNSVPPITNQKSPK) is disordered. Residues 256-274 (GTFTDTNSVPPITNQKSPK) show a composition bias toward polar residues.

Belongs to the polysaccharide lyase 1 family.

The catalysed reaction is Eliminative cleavage of (1-&gt;4)-alpha-D-galacturonan methyl ester to give oligosaccharides with 4-deoxy-6-O-methyl-alpha-D-galact-4-enuronosyl groups at their non-reducing ends.. This Pseudomonas marginalis (Pseudomonas panacis) protein is Pectin lyase (pnl).